The following is a 377-amino-acid chain: Alanine racemase (377 aa).

The Proton acceptor; specific for D-alanine role is filled by K37. Position 37 is an N6-(pyridoxal phosphate)lysine (K37). Residue R135 participates in substrate binding. The Proton acceptor; specific for L-alanine role is filled by Y271. M319 is a substrate binding site.

This sequence belongs to the alanine racemase family. It depends on pyridoxal 5'-phosphate as a cofactor.

It catalyses the reaction L-alanine = D-alanine. It participates in amino-acid biosynthesis; D-alanine biosynthesis; D-alanine from L-alanine: step 1/1. Catalyzes the interconversion of L-alanine and D-alanine. May also act on other amino acids. This chain is Alanine racemase (alr), found in Helicobacter pylori (strain J99 / ATCC 700824) (Campylobacter pylori J99).